The following is a 247-amino-acid chain: Ribosomal RNA large subunit methyltransferase E (247 aa).

Positions 1-21 (MKKTTKKTAGGYGGSGSHKLY) are disordered. Residues Gly-88, Trp-90, Asp-111, Asp-127, and Asp-151 each coordinate S-adenosyl-L-methionine. Lys-191 functions as the Proton acceptor in the catalytic mechanism.

Belongs to the class I-like SAM-binding methyltransferase superfamily. RNA methyltransferase RlmE family.

It is found in the cytoplasm. It catalyses the reaction uridine(2552) in 23S rRNA + S-adenosyl-L-methionine = 2'-O-methyluridine(2552) in 23S rRNA + S-adenosyl-L-homocysteine + H(+). Functionally, specifically methylates the uridine in position 2552 of 23S rRNA at the 2'-O position of the ribose in the fully assembled 50S ribosomal subunit. This is Ribosomal RNA large subunit methyltransferase E from Bartonella henselae (strain ATCC 49882 / DSM 28221 / CCUG 30454 / Houston 1) (Rochalimaea henselae).